Here is a 246-residue protein sequence, read N- to C-terminus: Phycocyanobilin:ferredoxin oxidoreductase (246 aa).

Belongs to the HY2 family.

The catalysed reaction is (2R,3Z)-phycocyanobilin + 4 oxidized [2Fe-2S]-[ferredoxin] = biliverdin IXalpha + 4 reduced [2Fe-2S]-[ferredoxin] + 4 H(+). Its function is as follows. Catalyzes the four-electron reduction of biliverdin IX-alpha (2-electron reduction at both the A and D rings); the reaction proceeds via an isolatable 2-electron intermediate, 181,182-dihydrobiliverdin. This is Phycocyanobilin:ferredoxin oxidoreductase from Crocosphaera subtropica (strain ATCC 51142 / BH68) (Cyanothece sp. (strain ATCC 51142)).